A 229-amino-acid chain; its full sequence is Enolase-phosphatase E1 (229 aa).

This sequence belongs to the HAD-like hydrolase superfamily. MasA/MtnC family. In terms of assembly, monomer. Mg(2+) serves as cofactor.

It carries out the reaction 5-methylsulfanyl-2,3-dioxopentyl phosphate + H2O = 1,2-dihydroxy-5-(methylsulfanyl)pent-1-en-3-one + phosphate. The protein operates within amino-acid biosynthesis; L-methionine biosynthesis via salvage pathway; L-methionine from S-methyl-5-thio-alpha-D-ribose 1-phosphate: step 3/6. It functions in the pathway amino-acid biosynthesis; L-methionine biosynthesis via salvage pathway; L-methionine from S-methyl-5-thio-alpha-D-ribose 1-phosphate: step 4/6. Bifunctional enzyme that catalyzes the enolization of 2,3-diketo-5-methylthiopentyl-1-phosphate (DK-MTP-1-P) into the intermediate 2-hydroxy-3-keto-5-methylthiopentenyl-1-phosphate (HK-MTPenyl-1-P), which is then dephosphorylated to form the acireductone 1,2-dihydroxy-3-keto-5-methylthiopentene (DHK-MTPene). This is Enolase-phosphatase E1 from Pectobacterium atrosepticum (strain SCRI 1043 / ATCC BAA-672) (Erwinia carotovora subsp. atroseptica).